The sequence spans 469 residues: 3-phosphoshikimate 1-carboxyvinyltransferase (469 aa).

The segment at lysine 21–lysine 45 is disordered. 3-phosphoshikimate contacts are provided by lysine 52, serine 53, and arginine 57. Lysine 52 lines the phosphoenolpyruvate pocket. Phosphoenolpyruvate-binding residues include glycine 125 and arginine 153. Residues serine 199, glutamine 201, aspartate 352, and lysine 379 each coordinate 3-phosphoshikimate. Residue glutamine 201 participates in phosphoenolpyruvate binding. Aspartate 352 acts as the Proton acceptor in catalysis. Phosphoenolpyruvate-binding residues include arginine 383 and arginine 426.

The protein belongs to the EPSP synthase family. In terms of assembly, monomer.

It localises to the cytoplasm. It carries out the reaction 3-phosphoshikimate + phosphoenolpyruvate = 5-O-(1-carboxyvinyl)-3-phosphoshikimate + phosphate. Its pathway is metabolic intermediate biosynthesis; chorismate biosynthesis; chorismate from D-erythrose 4-phosphate and phosphoenolpyruvate: step 6/7. Its function is as follows. Catalyzes the transfer of the enolpyruvyl moiety of phosphoenolpyruvate (PEP) to the 5-hydroxyl of shikimate-3-phosphate (S3P) to produce enolpyruvyl shikimate-3-phosphate and inorganic phosphate. This chain is 3-phosphoshikimate 1-carboxyvinyltransferase, found in Bradyrhizobium diazoefficiens (strain JCM 10833 / BCRC 13528 / IAM 13628 / NBRC 14792 / USDA 110).